The chain runs to 168 residues: MADPARARRLAVRIREVVASTLERGVKDPRLGMVTVTDVRLTPDLVDATVFYTVYGDETARQASAQALESARGLLRSQVGRATGVKVTPTLTFVHDRLPDDAQHLEKLISVARERDAYLAEVRRDARPAGDDDPYRRPRPAAGEVDELSEVDELSEVDEYGGTARQEG.

Residues 122–136 (VRRDARPAGDDDPYR) are compositionally biased toward basic and acidic residues. The interval 122 to 168 (VRRDARPAGDDDPYRRPRPAAGEVDELSEVDELSEVDEYGGTARQEG) is disordered. Acidic residues predominate over residues 144–159 (EVDELSEVDELSEVDE).

It belongs to the RbfA family. As to quaternary structure, monomer. Binds 30S ribosomal subunits, but not 50S ribosomal subunits or 70S ribosomes.

It localises to the cytoplasm. In terms of biological role, one of several proteins that assist in the late maturation steps of the functional core of the 30S ribosomal subunit. Associates with free 30S ribosomal subunits (but not with 30S subunits that are part of 70S ribosomes or polysomes). Required for efficient processing of 16S rRNA. May interact with the 5'-terminal helix region of 16S rRNA. The chain is Ribosome-binding factor A from Frankia casuarinae (strain DSM 45818 / CECT 9043 / HFP020203 / CcI3).